We begin with the raw amino-acid sequence, 276 residues long: 2-dehydro-3-deoxyphosphooctonate aldolase (276 aa).

It belongs to the KdsA family.

It localises to the cytoplasm. The enzyme catalyses D-arabinose 5-phosphate + phosphoenolpyruvate + H2O = 3-deoxy-alpha-D-manno-2-octulosonate-8-phosphate + phosphate. Its pathway is carbohydrate biosynthesis; 3-deoxy-D-manno-octulosonate biosynthesis; 3-deoxy-D-manno-octulosonate from D-ribulose 5-phosphate: step 2/3. The protein operates within bacterial outer membrane biogenesis; lipopolysaccharide biosynthesis. This is 2-dehydro-3-deoxyphosphooctonate aldolase from Helicobacter acinonychis (strain Sheeba).